A 176-amino-acid polypeptide reads, in one-letter code: Alkyl hydroperoxide reductase AhpD (176 aa).

Cysteine 131 (proton donor) is an active-site residue. Cysteines 131 and 134 form a disulfide. Residue cysteine 134 is the Cysteine sulfenic acid (-SOH) intermediate of the active site.

Belongs to the AhpD family.

The enzyme catalyses N(6)-[(R)-dihydrolipoyl]-L-lysyl-[lipoyl-carrier protein] + a hydroperoxide = N(6)-[(R)-lipoyl]-L-lysyl-[lipoyl-carrier protein] + an alcohol + H2O. Antioxidant protein with alkyl hydroperoxidase activity. Required for the reduction of the AhpC active site cysteine residues and for the regeneration of the AhpC enzyme activity. The sequence is that of Alkyl hydroperoxide reductase AhpD from Methylobacterium sp. (strain 4-46).